The primary structure comprises 356 residues: Arginine kinase (356 aa).

At Ala2 the chain carries N-acetylalanine. The region spanning 9 to 91 is the Phosphagen kinase N-terminal domain; that stretch reads KLEAGFKKLE…FDPIIEDYHV (83 aa). 64–68 contacts L-arginine; sequence GVGIY. The Phosphagen kinase C-terminal domain maps to 119–356; it reads YVISTRVRCG…LELIKMEKEM (238 aa). ATP is bound by residues 122-126 and His185; that span reads STRVR. An L-arginine-binding site is contributed by Glu225. Arg229 serves as a coordination point for ATP. Cys271 lines the L-arginine pocket. ATP is bound by residues 280-284 and 309-314; these read RASVH and RGTRGE. Residue Glu314 coordinates L-arginine.

Belongs to the ATP:guanido phosphotransferase family.

It catalyses the reaction L-arginine + ATP = N(omega)-phospho-L-arginine + ADP + H(+). The sequence is that of Arginine kinase from Penaeus monodon (Giant tiger prawn).